The following is a 732-amino-acid chain: Protein kinase YpkA (732 aa).

Residues Val-136–Leu-408 form the Protein kinase domain. ATP contacts are provided by residues Phe-142–Ser-150 and Lys-163. Asp-270 (proton acceptor) is an active-site residue.

Belongs to the protein kinase superfamily. Ser/Thr protein kinase family.

It is found in the secreted. It catalyses the reaction L-seryl-[protein] + ATP = O-phospho-L-seryl-[protein] + ADP + H(+). The catalysed reaction is L-threonyl-[protein] + ATP = O-phospho-L-threonyl-[protein] + ADP + H(+). In terms of biological role, acts as a virulence determinant. The sequence is that of Protein kinase YpkA (ypkA) from Yersinia pseudotuberculosis serotype I (strain IP32953).